The following is a 323-amino-acid chain: Pseudouridylate synthase TRUB2, mitochondrial (323 aa).

Catalysis depends on Asp98, which acts as the Nucleophile. The segment at 302–323 (SGHQQQLPSAGQPWASRVQAPL) is disordered.

Belongs to the pseudouridine synthase TruB family. As to quaternary structure, forms a regulatory protein-RNA complex, consisting of RCC1L, NGRN, RPUSD3, RPUSD4, TRUB2, FASTKD2 and 16S mt-rRNA.

The protein localises to the mitochondrion matrix. The catalysed reaction is a uridine in mRNA = a pseudouridine in mRNA. The enzyme catalyses uridine(55) in tRNA = pseudouridine(55) in tRNA. Functionally, minor enzyme contributing to the isomerization of uridine to pseudouridine (pseudouridylation) of specific mitochondrial mRNAs (mt-mRNAs) such as COXI and COXIII mt-mRNAs. As a component of a functional protein-RNA module, consisting of RCC1L, NGRN, RPUSD3, RPUSD4, TRUB2, FASTKD2 and 16S mitochondrial ribosomal RNA (16S mt-rRNA), controls 16S mt-rRNA abundance and is required for intra-mitochondrial translation. Also catalyzes pseudouridylation of some tRNAs, including synthesis of pseudouridine(55) from uracil-55, in the psi GC loop of a subset of tRNAs. The sequence is that of Pseudouridylate synthase TRUB2, mitochondrial from Rattus norvegicus (Rat).